A 337-amino-acid polypeptide reads, in one-letter code: Mannan polymerase complex subunit mnn9 (337 aa).

At 1–8 the chain is on the cytoplasmic side; the sequence is MRVYNKSR. A helical; Signal-anchor for type II membrane protein membrane pass occupies residues 9-29; it reads IVGQLLFVALGITFIYYLFTP. Residues 30–337 are Lumenal-facing; sequence SVNSNAKVQI…PYYLVFHHNE (308 aa).

Belongs to the ANP1/MMN9/VAN1 family.

It localises to the endoplasmic reticulum membrane. The protein localises to the golgi apparatus membrane. It functions in the pathway protein modification; protein glycosylation. Required for the addition of the long alpha 1,6-mannose backbone of N-linked glycans on cell wall and periplasmic proteins. This Schizosaccharomyces pombe (strain 972 / ATCC 24843) (Fission yeast) protein is Mannan polymerase complex subunit mnn9.